Consider the following 449-residue polypeptide: MSEEAPKHEAPSVISPIENEEKGLAPKPLERVPPNGGAKAWACVAGSFLLQFCSFGYVNACGIFQLYYQETMLKDQTSSALAWITTLQIFLLFMFGPAVGKMIDVYGCRRTLPPFSIGAVFSVCMLSLCTKYWQVMLAQGVAFGLAAAGLSLPAMATATQWFSTKKGLAVGIVSAGSSLGGVIYPCMLPRLIEQVGFASAVRWTALMQGILLFIANLLCSSPYPPLGRASKEASAEKDATEPTPRRSGLRGFKSLPWGFFVLGCFFTMWGLFAPLNYLPEMAALHGYQSFARYTLAIANAGSLVGRIVPGWVSDIIGQFNTMCIVTSLSGVLVLAFWLPLEFHTSLAGIIVFALLFGFVSGGFVSLGPPCVVSLAEDRVDEIGVKLGGFCLAIALGALTGLPIEGAIKDREGNKFTGLMCFAGATMILGGVCTGTARVFKGGPRLMKKV.

A run of 12 helical transmembrane segments spans residues 44–64 (VAGS…CGIF), 80–100 (ALAW…PAVG), 112–132 (LPPF…CTKY), 135–155 (VMLA…LPAM), 168–188 (LAVG…PCML), 195–215 (VGFA…LFIA), 255–275 (LPWG…FAPL), 296–316 (AIAN…SDII), 322–342 (MCIV…PLEF), 346–366 (LAGI…FVSL), 387–407 (GGFC…EGAI), and 415–435 (FTGL…CTGT).

This sequence belongs to the major facilitator superfamily. Monocarboxylate porter (TC 2.A.1.13) family.

It is found in the membrane. MFS-type transporter; part of the gene cluster that mediates the biosynthesis of hexadehydro-astechrome (HAS), a tryptophan-derived iron(III)-complex that acts as a virulence factor in infected mice. Required for the production of HAS. The chain is MFS-type transporter hasB from Aspergillus fumigatus (strain CBS 144.89 / FGSC A1163 / CEA10) (Neosartorya fumigata).